We begin with the raw amino-acid sequence, 418 residues long: Voltage-gated ClC-type chloride channel ClcB (418 aa).

Topologically, residues 1–4 (MFRR) are cytoplasmic. A helical membrane pass occupies residues 5-25 (LLIATVVGILAAFAVAGFRHA). Topologically, residues 26–53 (MLLLEWLFLNNDSGSLVNAATNLSPWRR) are periplasmic. The chain crosses the membrane as a helical span at residues 54–74 (LLTPALGGLAAGLLLMGWQKF). Over 75–145 (TQQRPHAPTD…QRFTPRQEWK (71 aa)) the chain is Cytoplasmic. Residues 146 to 166 (LWIACGAAAGMAAAYRAPLAG) form a helical membrane-spanning segment. Topologically, residues 167–177 (SLFIAEVLFGT) are periplasmic. The chain crosses the membrane as a helical span at residues 178 to 200 (MMLASLGPVIISAVVALLVSNLI). At 201–221 (NHSDALLYSVQLSVTVQARDY) the chain is on the cytoplasmic side. A helical transmembrane segment spans residues 222 to 242 (ALIISTGVLAGLCGPLLLTLM). Over 243 to 257 (NACHRGFVSLKLAPP) the chain is Periplasmic. Residues 258 to 278 (WQLALGGLIVGLLSLFTPAVW) form a helical membrane-spanning segment. The Cytoplasmic portion of the chain corresponds to 279-290 (GNGYSTVQSFLT). Residues 291 to 311 (APPLLMIIAGIFLCKLCAVLA) form a helical membrane-spanning segment. Topologically, residues 312-315 (SSGS) are periplasmic. A helical membrane pass occupies residues 316–336 (GAPGGVFTPTLFIGLAIGMLY). Residues 337–351 (GRSLGLWFPDGEEIT) lie on the Cytoplasmic side of the membrane. Residues 352 to 372 (LLLGLTGMATLLAATTHAPIM) traverse the membrane as a helical segment. Topologically, residues 373–379 (STLMICE) are periplasmic. Residues 380-400 (MTGEYQLLPGLLIACVIASVI) form a helical membrane-spanning segment. The Cytoplasmic portion of the chain corresponds to 401–418 (SRTLHRDSIYRQHTAQHS).

This sequence belongs to the chloride channel (TC 2.A.49) family. ClcB subfamily.

It localises to the cell inner membrane. Functionally, probably acts as an electrical shunt for an outwardly-directed proton pump that is linked to amino acid decarboxylation, as part of the extreme acid resistance (XAR) response. The polypeptide is Voltage-gated ClC-type chloride channel ClcB (clcB) (Escherichia coli O157:H7).